We begin with the raw amino-acid sequence, 421 residues long: Threonine--tRNA ligase editing subunit (421 aa).

This sequence belongs to the class-II aminoacyl-tRNA synthetase family. Archaea-specific ThrRS editing domain subfamily. Probably interacts with its catalytic subunit.

It localises to the cytoplasm. In terms of biological role, freestanding tRNA editing subunit of threonine--tRNA ligase, the catalytic subunit is probably AC Q9YDW0. Deacylates (edits) mischarged L-seryl-tRNA(Thr) in trans; has no activity on correctly charged L-threonyl-tRNA(Thr). Probably does not aminoacylate tRNA(Thr). Deacylates correctly charged glycyl-tRNA(Gly), but not glycyl-tRNA(Gly)(2'-dA76) (the terminal 2'-OH of tRNA adenine 76 has been dehydroxylated) nor the 2'-fluoro tRNA derivative, strongly suggesting the editing function is catalyzed by the 2'-OH of A76 of tRNA(Thr). This Aeropyrum pernix (strain ATCC 700893 / DSM 11879 / JCM 9820 / NBRC 100138 / K1) protein is Threonine--tRNA ligase editing subunit (thrS2).